The chain runs to 267 residues: Undecaprenyl-diphosphatase (267 aa).

Helical transmembrane passes span 1 to 21, 39 to 59, 83 to 103, 111 to 131, 144 to 164, 189 to 209, 218 to 238, and 246 to 266; these read MSYF…FLPI, QGLA…VIYF, AKLA…GLLM, LRSA…LWWV, TGWK…IPGT, FLMS…KLVT, FLLT…HFFL, and MTPF…FLLM.

It belongs to the UppP family.

The protein resides in the cell inner membrane. It carries out the reaction di-trans,octa-cis-undecaprenyl diphosphate + H2O = di-trans,octa-cis-undecaprenyl phosphate + phosphate + H(+). In terms of biological role, catalyzes the dephosphorylation of undecaprenyl diphosphate (UPP). Confers resistance to bacitracin. The chain is Undecaprenyl-diphosphatase from Vibrio campbellii (strain ATCC BAA-1116).